Consider the following 317-residue polypeptide: Metaxin-1 (317 aa).

Glycyl lysine isopeptide (Lys-Gly) (interchain with G-Cter in ubiquitin) cross-links involve residues Lys38, Lys41, and Lys78. A helical transmembrane segment spans residues 164-184 (EELEKELYQEARECLTLLSQR).

It belongs to the metaxin family. In terms of assembly, interacts with MTX2/metaxin-2. Associates with the mitochondrial contact site and cristae organizing system (MICOS) complex, composed of at least MICOS10/MIC10, CHCHD3/MIC19, CHCHD6/MIC25, APOOL/MIC27, IMMT/MIC60, APOO/MIC23/MIC26 and QIL1/MIC13. This complex was also known under the names MINOS or MitOS complex. The MICOS complex associates with mitochondrial outer membrane proteins SAMM50, MTX1 and MTX2 (together described as components of the mitochondrial outer membrane sorting assembly machinery (SAM) complex) and DNAJC11, mitochondrial inner membrane protein TMEM11 and with HSPA9. The MICOS and SAM complexes together with DNAJC11 are part of a large protein complex spanning both membranes termed the mitochondrial intermembrane space bridging (MIB) complex. Interacts with ARMC1. In terms of processing, ubiquitinated by PRKN during mitophagy, leading to its degradation and enhancement of mitophagy. Deubiquitinated by USP30.

Its subcellular location is the mitochondrion outer membrane. In terms of biological role, involved in transport of proteins into the mitochondrion. Essential for embryonic development. This chain is Metaxin-1 (MTX1), found in Sus scrofa (Pig).